A 539-amino-acid chain; its full sequence is Laccase-1 (539 aa).

An N-terminal signal peptide occupies residues 1–21 (MAFTAISLFLAALGVINTAFA). 2 Plastocyanin-like domains span residues 37–154 (AEVN…YDPE) and 166–309 (ESTV…HYLG). N-linked (GlcNAc...) asparagine glycosylation occurs at Asn-78. Residues His-88 and His-90 each contribute to the Cu cation site. 2 cysteine pairs are disulfide-bonded: Cys-109–Cys-513 and Cys-141–Cys-228. Asn-120 carries an N-linked (GlcNAc...) asparagine glycan. Positions 133 and 135 each coordinate Cu cation. Asn-202, Asn-233, Asn-240, Asn-293, Asn-318, Asn-353, Asn-385, and Asn-405 each carry an N-linked (GlcNAc...) asparagine glycan. Positions 374–495 (SPTVPVLLQI…GFAVVMAEDP (122 aa)) constitute a Plastocyanin-like 3 domain. The Cu cation site is built by His-421, His-424, and His-426. The N-linked (GlcNAc...) asparagine glycan is linked to Asn-457. Residues His-476, Cys-477, His-478, and His-482 each contribute to the Cu cation site. Asn-532 carries N-linked (GlcNAc...) asparagine glycosylation.

The protein belongs to the multicopper oxidase family. The cofactor is Cu cation.

The protein localises to the secreted. The catalysed reaction is 4 hydroquinone + O2 = 4 benzosemiquinone + 2 H2O. With respect to regulation, inhibited by chloride ions. Inhibited by citrate. Inhibited by oxalate. Activated by acetate. Functionally, in vitro, has activity towards 2,2'-azino-bis(3-ethylbenzthiazoline-6-sulfonic acid) (ABTS), 2,6-dimethoxy-phenol, and guaiacol. Although brown rot fungi preferentially degrade hemicellulose and cellulose, the enzyme may contribute to generating small amounts of lignin breakdown products required for catalytic reactions. This Fomitopsis schrenkii (Brown rot fungus) protein is Laccase-1.